The chain runs to 35 residues: Photosystem II reaction center protein T (35 aa).

A helical membrane pass occupies residues 3–23 (AFAYTLLMTLVVATLFFAVAF).

It belongs to the PsbT family. PSII is composed of 1 copy each of membrane proteins PsbA, PsbB, PsbC, PsbD, PsbE, PsbF, PsbH, PsbI, PsbJ, PsbK, PsbL, PsbM, PsbT, PsbX, PsbY, Psb30/Ycf12, peripheral proteins PsbO, CyanoQ (PsbQ), PsbU, PsbV and a large number of cofactors. It forms dimeric complexes.

Its subcellular location is the cellular thylakoid membrane. Functionally, found at the monomer-monomer interface of the photosystem II (PS II) dimer, plays a role in assembly and dimerization of PSII. PSII is a light-driven water plastoquinone oxidoreductase, using light energy to abstract electrons from H(2)O, generating a proton gradient subsequently used for ATP formation. The chain is Photosystem II reaction center protein T from Prochlorococcus marinus (strain MIT 9303).